Here is a 131-residue protein sequence, read N- to C-terminus: Transcription antitermination protein NusB (131 aa).

The protein belongs to the NusB family.

Involved in transcription antitermination. Required for transcription of ribosomal RNA (rRNA) genes. Binds specifically to the boxA antiterminator sequence of the ribosomal RNA (rrn) operons. The protein is Transcription antitermination protein NusB of Bacillus subtilis (strain 168).